A 729-amino-acid polypeptide reads, in one-letter code: Phosphoribosylformylglycinamidine synthase subunit PurL (729 aa).

His-54 is a catalytic residue. Positions 57 and 96 each coordinate ATP. Glu-98 serves as a coordination point for Mg(2+). Substrate-binding positions include 99 to 102 (SHNH) and Arg-121. The Proton acceptor role is filled by His-100. Asp-122 is a binding site for Mg(2+). Residue Gln-245 coordinates substrate. Asp-273 contacts Mg(2+). Position 317 to 319 (317 to 319 (ETQ)) interacts with substrate. ATP is bound by residues Asp-495 and Gly-532. Asn-533 provides a ligand contact to Mg(2+). Residue Ser-535 coordinates substrate.

Belongs to the FGAMS family. In terms of assembly, monomer. Part of the FGAM synthase complex composed of 1 PurL, 1 PurQ and 2 PurS subunits.

Its subcellular location is the cytoplasm. It carries out the reaction N(2)-formyl-N(1)-(5-phospho-beta-D-ribosyl)glycinamide + L-glutamine + ATP + H2O = 2-formamido-N(1)-(5-O-phospho-beta-D-ribosyl)acetamidine + L-glutamate + ADP + phosphate + H(+). Its pathway is purine metabolism; IMP biosynthesis via de novo pathway; 5-amino-1-(5-phospho-D-ribosyl)imidazole from N(2)-formyl-N(1)-(5-phospho-D-ribosyl)glycinamide: step 1/2. Functionally, part of the phosphoribosylformylglycinamidine synthase complex involved in the purines biosynthetic pathway. Catalyzes the ATP-dependent conversion of formylglycinamide ribonucleotide (FGAR) and glutamine to yield formylglycinamidine ribonucleotide (FGAM) and glutamate. The FGAM synthase complex is composed of three subunits. PurQ produces an ammonia molecule by converting glutamine to glutamate. PurL transfers the ammonia molecule to FGAR to form FGAM in an ATP-dependent manner. PurS interacts with PurQ and PurL and is thought to assist in the transfer of the ammonia molecule from PurQ to PurL. This chain is Phosphoribosylformylglycinamidine synthase subunit PurL, found in Staphylococcus carnosus (strain TM300).